Consider the following 217-residue polypeptide: 3,4-dihydroxy-2-butanone 4-phosphate synthase (217 aa).

D-ribulose 5-phosphate contacts are provided by residues 40 to 41, aspartate 45, 153 to 157, and glutamate 177; these read RE and RRGHT. Glutamate 41 contacts Mg(2+). Mg(2+) is bound at residue histidine 156.

It belongs to the DHBP synthase family. As to quaternary structure, homodimer. Requires Mg(2+) as cofactor. Mn(2+) is required as a cofactor.

It carries out the reaction D-ribulose 5-phosphate = (2S)-2-hydroxy-3-oxobutyl phosphate + formate + H(+). Its pathway is cofactor biosynthesis; riboflavin biosynthesis; 2-hydroxy-3-oxobutyl phosphate from D-ribulose 5-phosphate: step 1/1. Its function is as follows. Catalyzes the conversion of D-ribulose 5-phosphate to formate and 3,4-dihydroxy-2-butanone 4-phosphate. This chain is 3,4-dihydroxy-2-butanone 4-phosphate synthase, found in Aliivibrio fischeri (Vibrio fischeri).